The sequence spans 497 residues: Cytochrome P450 71A14 (497 aa).

The chain crosses the membrane as a helical span at residues 3 to 23; it reads MIIISLCLATILALLLLKQFL. Residue C440 coordinates heme.

The protein belongs to the cytochrome P450 family. The cofactor is heme.

Its subcellular location is the membrane. This chain is Cytochrome P450 71A14 (CYP71A14), found in Arabidopsis thaliana (Mouse-ear cress).